Reading from the N-terminus, the 184-residue chain is Holliday junction branch migration complex subunit RuvA (184 aa).

The interval 1–61 (MIAALRGNIF…ENEYTLYGFA (61 aa)) is domain I. The domain II stretch occupies residues 62–135 (DKNEKKLFDS…GEFEVVFEEQ (74 aa)). Gln-135 is a region of interest (flexible linker). A domain III region spans residues 135–184 (QNPVFNQALSALESLGFNKNDIVKALNGIKSDNLEETIKLALKKLSKDIK).

This sequence belongs to the RuvA family. Homotetramer. Forms an RuvA(8)-RuvB(12)-Holliday junction (HJ) complex. HJ DNA is sandwiched between 2 RuvA tetramers; dsDNA enters through RuvA and exits via RuvB. An RuvB hexamer assembles on each DNA strand where it exits the tetramer. Each RuvB hexamer is contacted by two RuvA subunits (via domain III) on 2 adjacent RuvB subunits; this complex drives branch migration. In the full resolvosome a probable DNA-RuvA(4)-RuvB(12)-RuvC(2) complex forms which resolves the HJ.

It is found in the cytoplasm. In terms of biological role, the RuvA-RuvB-RuvC complex processes Holliday junction (HJ) DNA during genetic recombination and DNA repair, while the RuvA-RuvB complex plays an important role in the rescue of blocked DNA replication forks via replication fork reversal (RFR). RuvA specifically binds to HJ cruciform DNA, conferring on it an open structure. The RuvB hexamer acts as an ATP-dependent pump, pulling dsDNA into and through the RuvAB complex. HJ branch migration allows RuvC to scan DNA until it finds its consensus sequence, where it cleaves and resolves the cruciform DNA. The chain is Holliday junction branch migration complex subunit RuvA from Nautilia profundicola (strain ATCC BAA-1463 / DSM 18972 / AmH).